We begin with the raw amino-acid sequence, 464 residues long: 3-isopropylmalate dehydratase large subunit (464 aa).

[4Fe-4S] cluster is bound by residues C337, C397, and C400.

The protein belongs to the aconitase/IPM isomerase family. LeuC type 1 subfamily. As to quaternary structure, heterodimer of LeuC and LeuD. [4Fe-4S] cluster is required as a cofactor.

The catalysed reaction is (2R,3S)-3-isopropylmalate = (2S)-2-isopropylmalate. It participates in amino-acid biosynthesis; L-leucine biosynthesis; L-leucine from 3-methyl-2-oxobutanoate: step 2/4. Catalyzes the isomerization between 2-isopropylmalate and 3-isopropylmalate, via the formation of 2-isopropylmaleate. This is 3-isopropylmalate dehydratase large subunit from Bacillus thuringiensis subsp. konkukian (strain 97-27).